The sequence spans 181 residues: Adenylate kinase (181 aa).

ATP is bound at residue 10-15 (GAGKGT). Residues 30–59 (STGDLFRANIGEGTPLGKEAKSYIDAGKLV) are NMP. AMP contacts are provided by residues T31, R36, 57–59 (KLV), 85–88 (GFPR), and Q92. The interval 126-132 (ARGRADD) is LID. R127 is an ATP binding site. AMP is bound by residues R129 and R140. G166 serves as a coordination point for ATP.

Belongs to the adenylate kinase family. In terms of assembly, monomer.

Its subcellular location is the cytoplasm. The catalysed reaction is AMP + ATP = 2 ADP. It functions in the pathway purine metabolism; AMP biosynthesis via salvage pathway; AMP from ADP: step 1/1. Functionally, catalyzes the reversible transfer of the terminal phosphate group between ATP and AMP. Plays an important role in cellular energy homeostasis and in adenine nucleotide metabolism. This is Adenylate kinase from Corynebacterium diphtheriae (strain ATCC 700971 / NCTC 13129 / Biotype gravis).